A 280-amino-acid chain; its full sequence is Protoheme IX farnesyltransferase 2 (280 aa).

The next 9 membrane-spanning stretches (helical) occupy residues 12–32, 35–55, 76–96, 98–118, 129–149, 158–178, 199–221, 226–248, and 255–275; these read VIWLLILASVAGYIYGGGGVD, LFSLLAVAFLSTGGSAAFNHY, LITPNAALAYSLALSATGISL, FLLLGLLPGLFVLLGWLFYAV, WLNIFGGGFAGNAVFLGGYAL, AVLISFAIYLWTPSHIWALAF, ERAVAVISAINAAAAAYILWLYL, GAGGAIVALGVAATIATSIYAAV, and MWKMYKASSPMLTLFLIALMI.

This sequence belongs to the UbiA prenyltransferase family. Protoheme IX farnesyltransferase subfamily.

The protein localises to the cell membrane. The catalysed reaction is heme b + (2E,6E)-farnesyl diphosphate + H2O = Fe(II)-heme o + diphosphate. The protein operates within porphyrin-containing compound metabolism; heme O biosynthesis; heme O from protoheme: step 1/1. Converts heme B (protoheme IX) to heme O by substitution of the vinyl group on carbon 2 of heme B porphyrin ring with a hydroxyethyl farnesyl side group. The chain is Protoheme IX farnesyltransferase 2 from Pyrobaculum aerophilum (strain ATCC 51768 / DSM 7523 / JCM 9630 / CIP 104966 / NBRC 100827 / IM2).